Here is a 455-residue protein sequence, read N- to C-terminus: 3-phosphoshikimate 1-carboxyvinyltransferase (455 aa).

A disordered region spans residues 1–23 (MSHGSNPRPATARKSSDLKGTLR). 3-phosphoshikimate is bound by residues K28, S29, and R33. Phosphoenolpyruvate is bound at residue K28. Phosphoenolpyruvate is bound by residues G100 and R128. Positions 173, 175, 326, and 353 each coordinate 3-phosphoshikimate. Q175 contributes to the phosphoenolpyruvate binding site. D326 serves as the catalytic Proton acceptor. Residues R357 and R405 each contribute to the phosphoenolpyruvate site.

It belongs to the EPSP synthase family. Monomer.

The protein resides in the cytoplasm. It carries out the reaction 3-phosphoshikimate + phosphoenolpyruvate = 5-O-(1-carboxyvinyl)-3-phosphoshikimate + phosphate. It participates in metabolic intermediate biosynthesis; chorismate biosynthesis; chorismate from D-erythrose 4-phosphate and phosphoenolpyruvate: step 6/7. Catalyzes the transfer of the enolpyruvyl moiety of phosphoenolpyruvate (PEP) to the 5-hydroxyl of shikimate-3-phosphate (S3P) to produce enolpyruvyl shikimate-3-phosphate and inorganic phosphate. The protein is 3-phosphoshikimate 1-carboxyvinyltransferase of Rhizobium meliloti (strain 1021) (Ensifer meliloti).